We begin with the raw amino-acid sequence, 313 residues long: tRNA dimethylallyltransferase (313 aa).

11 to 18 (GPTASGKT) contacts ATP. 13 to 18 (TASGKT) is a substrate binding site. Interaction with substrate tRNA regions lie at residues 36–39 (DSAL), 160–164 (QRINR), and 241–246 (RCVGYR).

Belongs to the IPP transferase family. In terms of assembly, monomer. Requires Mg(2+) as cofactor.

The catalysed reaction is adenosine(37) in tRNA + dimethylallyl diphosphate = N(6)-dimethylallyladenosine(37) in tRNA + diphosphate. Catalyzes the transfer of a dimethylallyl group onto the adenine at position 37 in tRNAs that read codons beginning with uridine, leading to the formation of N6-(dimethylallyl)adenosine (i(6)A). The chain is tRNA dimethylallyltransferase from Haemophilus ducreyi (strain 35000HP / ATCC 700724).